The sequence spans 534 residues: (E)-beta-farnesene synthase (534 aa).

Residues Asp-287, Asp-291, Asn-431, Ser-435, and Glu-439 each coordinate Mg(2+). Positions Asp-287 to Asp-291 match the DDXXD motif motif.

Belongs to the terpene synthase family. The cofactor is Mg(2+). It depends on Co(2+) as a cofactor. Requires Mn(2+) as cofactor.

It localises to the cytoplasm. It carries out the reaction (2E,6E)-farnesyl diphosphate = (E)-beta-farnesene + diphosphate. It participates in secondary metabolite biosynthesis; terpenoid biosynthesis. Sesquiterpene cyclase catalyzing the production of beta-farnesene and alpha-bergamotene in equal amounts from farnesyl diphosphate. Involved in indirect defense by producing volatile signals attracting natural enemies of herbivores. This is (E)-beta-farnesene synthase from Zea mays subsp. mexicana (Mexican teosinte).